The primary structure comprises 619 residues: Schlafen family member 12-like (619 aa).

Residues 598–618 traverse the membrane as a helical segment; the sequence is IFLFVCLFRFCLFVCLFVFFL.

The protein belongs to the Schlafen family.

The protein resides in the membrane. This is Schlafen family member 12-like (SLFN12L) from Pongo abelii (Sumatran orangutan).